Consider the following 218-residue polypeptide: Small ribosomal subunit protein uS3 (218 aa).

The KH type-2 domain occupies 43-113 (IREHIERKLA…KVQVNVREVS (71 aa)).

Belongs to the universal ribosomal protein uS3 family. In terms of assembly, part of the 30S ribosomal subunit. Forms a tight complex with proteins S10 and S14.

Its function is as follows. Binds the lower part of the 30S subunit head. Binds mRNA in the 70S ribosome, positioning it for translation. The polypeptide is Small ribosomal subunit protein uS3 (Rubrobacter xylanophilus (strain DSM 9941 / JCM 11954 / NBRC 16129 / PRD-1)).